The primary structure comprises 392 residues: Formate-dependent phosphoribosylglycinamide formyltransferase (392 aa).

N(1)-(5-phospho-beta-D-ribosyl)glycinamide-binding positions include Glu-22–Leu-23 and Glu-82. ATP-binding positions include Arg-114, Lys-155, Ser-160 to Gln-165, Glu-195 to Ile-198, and Glu-203. Residues Val-119–Leu-308 enclose the ATP-grasp domain. The Mg(2+) site is built by Glu-267 and Glu-279. Residues Asp-286, Lys-355, and Arg-362 to Arg-363 each bind N(1)-(5-phospho-beta-D-ribosyl)glycinamide.

Belongs to the PurK/PurT family. In terms of assembly, homodimer.

The enzyme catalyses N(1)-(5-phospho-beta-D-ribosyl)glycinamide + formate + ATP = N(2)-formyl-N(1)-(5-phospho-beta-D-ribosyl)glycinamide + ADP + phosphate + H(+). It participates in purine metabolism; IMP biosynthesis via de novo pathway; N(2)-formyl-N(1)-(5-phospho-D-ribosyl)glycinamide from N(1)-(5-phospho-D-ribosyl)glycinamide (formate route): step 1/1. Functionally, involved in the de novo purine biosynthesis. Catalyzes the transfer of formate to 5-phospho-ribosyl-glycinamide (GAR), producing 5-phospho-ribosyl-N-formylglycinamide (FGAR). Formate is provided by PurU via hydrolysis of 10-formyl-tetrahydrofolate. The sequence is that of Formate-dependent phosphoribosylglycinamide formyltransferase from Wigglesworthia glossinidia brevipalpis.